The sequence spans 69 residues: Neurotoxin Cex5 (69 aa).

Residue alanine 1 is a signal peptide. The LCN-type CS-alpha/beta domain maps to 2-67 (KDGYLVSKST…TYPIPGKSCG (66 aa)). Intrachain disulfides connect cysteine 13-cysteine 66, cysteine 17-cysteine 42, cysteine 26-cysteine 47, and cysteine 30-cysteine 49. Cysteine 66 is modified (cysteine amide). A propeptide spanning residues 67 to 69 (GKK) is cleaved from the precursor.

Belongs to the long (4 C-C) scorpion toxin superfamily. Sodium channel inhibitor family. Beta subfamily. Expressed by the venom gland.

It is found in the secreted. Its function is as follows. Beta toxins bind voltage-independently at site-4 of sodium channels (Nav) and shift the voltage of activation toward more negative potentials thereby affecting sodium channel activation and promoting spontaneous and repetitive firing. In Centruroides exilicauda (Bark scorpion), this protein is Neurotoxin Cex5.